The chain runs to 658 residues: Translin-associated factor X-interacting protein 1 (658 aa).

2 coiled-coil regions span residues 144-184 and 230-295; these read EISL…AEEY and ALKM…LMQL.

As to quaternary structure, interacts with TSNAX.

It localises to the cytoplasm. It is found in the perinuclear region. In terms of biological role, possible role in spermatogenesis. In Homo sapiens (Human), this protein is Translin-associated factor X-interacting protein 1.